Here is a 239-residue protein sequence, read N- to C-terminus: MGGNQFRFKQFTIRQDRCAMKVGTDGTLLGAWVDVSGAEKILDIGTGTGLIALMLAQRSSQLKVDIDAVEIDINSSIQARENVERSRWSDRVKVENYSIQKYIDICQKRYDLIVSNPPFFENASKPVKKARTVARHTDFLSQADLLQAAVKLLSDTGKLAVIYPVEQAHNFQEKAEYLGLFCQRKLDVKPMPKIPTKRILMELSKKKLPLQKNTLTIEVKQYTYTPEFITLIKDFYLKY.

This sequence belongs to the methyltransferase superfamily. tRNA (adenine-N(6)-)-methyltransferase family.

The protein localises to the cytoplasm. The enzyme catalyses adenosine(37) in tRNA1(Val) + S-adenosyl-L-methionine = N(6)-methyladenosine(37) in tRNA1(Val) + S-adenosyl-L-homocysteine + H(+). Specifically methylates the adenine in position 37 of tRNA(1)(Val) (anticodon cmo5UAC). The protein is tRNA1(Val) (adenine(37)-N6)-methyltransferase of Trichodesmium erythraeum (strain IMS101).